Consider the following 419-residue polypeptide: MLPGEEALVKCEYMKKNFCLASLIKIIKKSPLRVNPKCSFYSDCGGCSMQEIEPHYQFAIKKKLLINALSRIGKLNDFPEPISITPSQFFHYRNKSTFPVYNESYGNTIIGYYQRNSHKIVDIDNCPVLDHKINKALSDIRLILKDNHINADHDIRRKGGLRHISIRSGINTNEVLITFVSNFSIKKLLFPITNKLNGSESNVVGILNNIQPKPNNKIFGATTEILTGRDYIYDKFCHMDILIGSTSFFQVNLVEAEKAINCIRNIISNTNKIVRIIDAYSGIGTMSIPLASDGYRVIGIEINNEAHEIAIRNAEINNIKTITFENQDVTKYLPKILLPNDFLILDPPRKGLDPSLIDVITKLMPIHICYLSCNPATLARDLSLILREHKYSIISITAFDFFPQTTHLETLVYLKRLTS.

Residues Cys-38, Cys-44, Cys-47, and Cys-126 each contribute to the [4Fe-4S] cluster site. 4 residues coordinate S-adenosyl-L-methionine: Gln-250, Tyr-280, Glu-301, and Asp-346. The active-site Nucleophile is the Cys-373.

Belongs to the class I-like SAM-binding methyltransferase superfamily. RNA M5U methyltransferase family.

This is an uncharacterized protein from Prochlorococcus marinus (strain SARG / CCMP1375 / SS120).